Here is a 260-residue protein sequence, read N- to C-terminus: Uroplakin-1b (260 aa).

Residues 1–15 (MAKDNSTVRCFQGLL) are Cytoplasmic-facing. A helical transmembrane segment spans residues 16-36 (IFGNVIIGCCGIALTAECIFF). Residues 37–60 (VSDQHSLYPLLEATDNDDIYGAAW) are Extracellular-facing. The helical transmembrane segment at 61-81 (IGIFVGICLFCLSVLGIVGIM) threads the bilayer. Topologically, residues 82–86 (KSSRK) are cytoplasmic. A helical membrane pass occupies residues 87-107 (ILLAYFILMFIVYAFEVASCI). Residues 108-229 (TAATQQDFFT…ELISGPMNRH (122 aa)) lie on the Extracellular side of the membrane. The chain crosses the membrane as a helical span at residues 230-250 (AWGVAWFGFAILCWTFWVLLG). Residues 251 to 260 (TMFYWSRIEY) lie on the Cytoplasmic side of the membrane.

The protein belongs to the tetraspanin (TM4SF) family. In terms of assembly, heterodimer with uroplakin-3A (UPK3A) or uroplakin-3B (UPK3B). Post-translationally, N-glycosylated with high-mannose oligosaccharides. Bladder epithelium.

Its subcellular location is the membrane. Functionally, component of the asymmetric unit membrane (AUM); a highly specialized biomembrane elaborated by terminally differentiated urothelial cells. May play an important role in normal bladder epithelial physiology, possibly in regulating membrane permeability of superficial umbrella cells or in stabilizing the apical membrane through AUM/cytoskeletal interactions. The chain is Uroplakin-1b (UPK1B) from Homo sapiens (Human).